The following is a 130-amino-acid chain: Small ribosomal subunit protein uS8 (130 aa).

Belongs to the universal ribosomal protein uS8 family.

This chain is Small ribosomal subunit protein uS8 (RPS22), found in Kluyveromyces marxianus (Yeast).